The chain runs to 432 residues: Putative D-alanyl-D-alanine carboxypeptidase (432 aa).

A helical; Signal-anchor membrane pass occupies residues Ala7–Leu25.

This sequence belongs to the peptidase S12 family. YfeW subfamily.

The protein localises to the cell inner membrane. It catalyses the reaction Preferential cleavage: (Ac)2-L-Lys-D-Ala-|-D-Ala. Also transpeptidation of peptidyl-alanyl moieties that are N-acyl substituents of D-alanine.. In Salmonella gallinarum (strain 287/91 / NCTC 13346), this protein is Putative D-alanyl-D-alanine carboxypeptidase.